Consider the following 252-residue polypeptide: 2-succinyl-6-hydroxy-2,4-cyclohexadiene-1-carboxylate synthase (252 aa).

This sequence belongs to the AB hydrolase superfamily. MenH family. As to quaternary structure, monomer.

It catalyses the reaction 5-enolpyruvoyl-6-hydroxy-2-succinyl-cyclohex-3-ene-1-carboxylate = (1R,6R)-6-hydroxy-2-succinyl-cyclohexa-2,4-diene-1-carboxylate + pyruvate. It participates in quinol/quinone metabolism; 1,4-dihydroxy-2-naphthoate biosynthesis; 1,4-dihydroxy-2-naphthoate from chorismate: step 3/7. The protein operates within quinol/quinone metabolism; menaquinone biosynthesis. Functionally, catalyzes a proton abstraction reaction that results in 2,5-elimination of pyruvate from 2-succinyl-5-enolpyruvyl-6-hydroxy-3-cyclohexene-1-carboxylate (SEPHCHC) and the formation of 2-succinyl-6-hydroxy-2,4-cyclohexadiene-1-carboxylate (SHCHC). The chain is 2-succinyl-6-hydroxy-2,4-cyclohexadiene-1-carboxylate synthase from Salmonella choleraesuis (strain SC-B67).